Here is a 526-residue protein sequence, read N- to C-terminus: MSFQQEVSKRRTFAIISHPDAGKTTITEKVLLFGNAIQKAGTVKGRGSNQHAKSDWMEMEKERGISVTTSVMQFPYNDCLVNLLDTPGHEDFSEDTYRTLTAVDSCLMVIDAAKGVEDRTRKLMEVTRLRDTPIVTFMNKLDRDVRDPMEVLDEVESELGMACAPISWPIGCGKEFKGVYHIHRDETILYESGHGHEIQEVRIIKGLDNPELDEAVGEDLASSVREELELVIGACPEFDHELFLAGELTPVYFGTALGNFGVDHMLDGLTRWAPAPQTRQANERDVEATEEKFSGFVFKIQANMDPKHRDRIAFMRIVSGTYDQGMKMNHVRTGKNVSISDAVTFMAGDRARAEKAYAGDIIGLHNHGTIQIGDTFTQGESLKFAGIPNFAPELFRRIRLRDPLKQKQLLKGLVQLSEEGAVQVFRPLQNNDLIVGAVGVLQFDVVVARLKAEYNVEAIYEGVNVATARWVECDDAKKLEEFKRKSQANLALDGGDNLSYIAPTMVNLNLASERFPEVQFRATREH.

The 270-residue stretch at S8–Q277 folds into the tr-type G domain. GTP contacts are provided by residues S17–T24, D85–H89, and N139–D142.

It belongs to the TRAFAC class translation factor GTPase superfamily. Classic translation factor GTPase family. PrfC subfamily.

The protein resides in the cytoplasm. Functionally, increases the formation of ribosomal termination complexes and stimulates activities of RF-1 and RF-2. It binds guanine nucleotides and has strong preference for UGA stop codons. It may interact directly with the ribosome. The stimulation of RF-1 and RF-2 is significantly reduced by GTP and GDP, but not by GMP. This is Peptide chain release factor 3 from Vibrio atlanticus (strain LGP32) (Vibrio splendidus (strain Mel32)).